Reading from the N-terminus, the 688-residue chain is Potassium-transporting ATPase ATP-binding subunit (688 aa).

4 consecutive transmembrane segments (helical) span residues phenylalanine 37–isoleucine 57, isoleucine 65–isoleucine 85, isoleucine 219–leucine 239, and valine 262–isoleucine 282. Aspartate 313 functions as the 4-aspartylphosphate intermediate in the catalytic mechanism. ATP is bound by residues aspartate 350, glutamate 354, phenylalanine 383–serine 390, and lysine 401. The Mg(2+) site is built by aspartate 524 and aspartate 528. Helical transmembrane passes span phenylalanine 594–methionine 614, alanine 622–leucine 642, and isoleucine 668–valine 688.

Belongs to the cation transport ATPase (P-type) (TC 3.A.3) family. Type IA subfamily. As to quaternary structure, the system is composed of three essential subunits: KdpA, KdpB and KdpC.

It is found in the cell membrane. The enzyme catalyses K(+)(out) + ATP + H2O = K(+)(in) + ADP + phosphate + H(+). Its function is as follows. Part of the high-affinity ATP-driven potassium transport (or Kdp) system, which catalyzes the hydrolysis of ATP coupled with the electrogenic transport of potassium into the cytoplasm. This subunit is responsible for energy coupling to the transport system and for the release of the potassium ions to the cytoplasm. The polypeptide is Potassium-transporting ATPase ATP-binding subunit (Clostridium botulinum (strain Alaska E43 / Type E3)).